The primary structure comprises 363 residues: NADH-quinone oxidoreductase subunit H (363 aa).

Helical transmembrane passes span 29–49 (VLKILLIAVPVIVSVAFYVVW), 62–82 (GPMYVGMGIFQAFADVFKLLF), 96–116 (FIIAPLLTLAPAFAAWSVVPF), 127–147 (VGLLYLLAMTSLGVYGIILAG), 163–183 (AAQVVSYEIAMGFALVGVMIA), 202–222 (FFDWFLIPLFPLFIVYWVSGV), 238–257 (EIVAGHMVEYSGGAFALFFL), 278–298 (WLSPIQGWVNADISPWIDWLW), 299–319 (KGGWPWLLMKVFFFASAYIWF), and 339–359 (FIPLTIVWIAVTALMVFYGVI).

The protein belongs to the complex I subunit 1 family. As to quaternary structure, NDH-1 is composed of 14 different subunits. Subunits NuoA, H, J, K, L, M, N constitute the membrane sector of the complex.

It localises to the cell inner membrane. It catalyses the reaction a quinone + NADH + 5 H(+)(in) = a quinol + NAD(+) + 4 H(+)(out). In terms of biological role, NDH-1 shuttles electrons from NADH, via FMN and iron-sulfur (Fe-S) centers, to quinones in the respiratory chain. The immediate electron acceptor for the enzyme in this species is believed to be ubiquinone. Couples the redox reaction to proton translocation (for every two electrons transferred, four hydrogen ions are translocated across the cytoplasmic membrane), and thus conserves the redox energy in a proton gradient. This subunit may bind ubiquinone. The protein is NADH-quinone oxidoreductase subunit H of Xanthomonas oryzae pv. oryzae (strain MAFF 311018).